The sequence spans 307 residues: Nucleotide-binding protein Sca_0414 (307 aa).

Residue 19–26 coordinates ATP; sequence GMSGAGKS. 70–73 serves as a coordination point for GTP; that stretch reads DLRG.

This sequence belongs to the RapZ-like family.

Displays ATPase and GTPase activities. The sequence is that of Nucleotide-binding protein Sca_0414 from Staphylococcus carnosus (strain TM300).